Consider the following 238-residue polypeptide: Ribonuclease PH (238 aa).

Phosphate-binding positions include R86 and G124–R126.

Belongs to the RNase PH family. Homohexameric ring arranged as a trimer of dimers.

The catalysed reaction is tRNA(n+1) + phosphate = tRNA(n) + a ribonucleoside 5'-diphosphate. Its function is as follows. Phosphorolytic 3'-5' exoribonuclease that plays an important role in tRNA 3'-end maturation. Removes nucleotide residues following the 3'-CCA terminus of tRNAs; can also add nucleotides to the ends of RNA molecules by using nucleoside diphosphates as substrates, but this may not be physiologically important. Probably plays a role in initiation of 16S rRNA degradation (leading to ribosome degradation) during starvation. The protein is Ribonuclease PH of Histophilus somni (strain 129Pt) (Haemophilus somnus).